A 315-amino-acid polypeptide reads, in one-letter code: Thymidylate synthase (315 aa).

DUMP-binding positions include Arg29 and 156-157 (RR). Residue Cys176 is the Nucleophile of the active site. Residues 213–216 (RSCD), Asn224, and 254–256 (HVY) each bind dUMP. Residue Asp216 participates in (6R)-5,10-methylene-5,6,7,8-tetrahydrofolate binding.

It belongs to the thymidylate synthase family. In terms of assembly, homodimer.

The catalysed reaction is dUMP + (6R)-5,10-methylene-5,6,7,8-tetrahydrofolate = 7,8-dihydrofolate + dTMP. It functions in the pathway pyrimidine metabolism; dTTP biosynthesis. The protein is Thymidylate synthase (TMP1) of Candida albicans (strain SC5314 / ATCC MYA-2876) (Yeast).